Here is a 513-residue protein sequence, read N- to C-terminus: Activin receptor type-2A (513 aa).

The N-terminal stretch at 1–19 is a signal peptide; that stretch reads MGAATKLAFAVFLISCSSG. The Extracellular segment spans residues 20-139; that stretch reads AILGRSETQE…VTPKPPLFNT (120 aa). 5 cysteine pairs are disulfide-bonded: cysteine 30-cysteine 60, cysteine 50-cysteine 78, cysteine 85-cysteine 104, cysteine 91-cysteine 103, and cysteine 105-cysteine 110. Residues asparagine 43 and asparagine 66 are each glycosylated (N-linked (GlcNAc...) asparagine). The helical transmembrane segment at 140 to 160 threads the bilayer; sequence LLYSLVPIMGIAVIVLFSFWM. At 161-513 the chain is on the cytoplasmic side; the sequence is YRHHKLAYPP…VDFPPKESSL (353 aa). The 294-residue stretch at 192-485 folds into the Protein kinase domain; it reads LQLLEIKARG…EERIIQMQKL (294 aa). ATP-binding positions include 198–206 and lysine 219; that span reads KARGRFGCV. The active-site Proton acceptor is aspartate 322.

This sequence belongs to the protein kinase superfamily. TKL Ser/Thr protein kinase family. TGFB receptor subfamily. The cofactor is Mg(2+). Mn(2+) serves as cofactor. Expressed in hen anterior pituitary during the ovulatory cycle and in the ovarian follicle.

The protein resides in the cell membrane. It catalyses the reaction L-threonyl-[receptor-protein] + ATP = O-phospho-L-threonyl-[receptor-protein] + ADP + H(+). The enzyme catalyses L-seryl-[receptor-protein] + ATP = O-phospho-L-seryl-[receptor-protein] + ADP + H(+). Its function is as follows. On ligand binding, forms a receptor complex consisting of two type II and two type I transmembrane serine/threonine kinases. Type II receptors phosphorylate and activate type I receptors which autophosphorylate, then bind and activate SMAD transcriptional regulators. Receptor for activin A, activin B and inhibin A. May modulate neuropeptide expression in dorsal root ganglia (DRG) neurons and ovarian follicle development. In Gallus gallus (Chicken), this protein is Activin receptor type-2A (ACVR2A).